A 260-amino-acid chain; its full sequence is MAGSPLLWGPRAGGVGLLVLLLLGLFRPPPALCARPVKEPRGLSAASPPLAETGAPRRFRRSVPRGEAAGAVQELARALAHLLEAERQERARAEAQEAEDQQARVLAQLLRVWGAPRNSDPALGLDDDPDAPAAQLARALLRARLDPAALAAQLVPAPVPAAALRPRPPVYDDGPAGPDAEEAGDETPDVDPELLRYLLGRILAGSADSEGVAAPRRLRRAADHDVGSELPPEGVLGALLRVKRLETPAPQVPARRLLPP.

The N-terminal stretch at 1 to 33 (MAGSPLLWGPRAGGVGLLVLLLLGLFRPPPALC) is a signal peptide. The tract at residues 34–215 (ARPVKEPRGL…SADSEGVAAP (182 aa)) is proSAAS(1-180). The O-linked (GalNAc...) threonine glycan is linked to threonine 53. Positions 165–188 (RPRPPVYDDGPAGPDAEEAGDETP) are disordered. A compositionally biased stretch (acidic residues) spans 179 to 188 (DAEEAGDETP). The C-terminal inhibitory domain; interacts with PCSK1 stretch occupies residues 221-260 (AADHDVGSELPPEGVLGALLRVKRLETPAPQVPARRLLPP). Serine 228 carries an O-linked (GalNAc...) serine glycan. Positions 239–244 (LLRVKR) match the Sufficient for inhibition of PCSK1 motif. O-linked (GalNAc...) threonine glycosylation is present at threonine 247.

In terms of assembly, interacts via the C-terminal inhibitory domain with PCSK1 66 kDa form. Proteolytically cleaved in the Golgi. In terms of processing, O-glycosylated with a core 1 or possibly core 8 glycan. As to expression, expressed in brain and pancreas.

The protein resides in the secreted. It is found in the golgi apparatus. Its subcellular location is the trans-Golgi network. Functionally, may function in the control of the neuroendocrine secretory pathway. Proposed be a specific endogenous inhibitor of PCSK1. ProSAAS and Big PEN-LEN, both containing the C-terminal inhibitory domain, but not the further processed peptides reduce PCSK1 activity in the endoplasmic reticulum and Golgi. It reduces the activity of the 84 kDa form but not the autocatalytically derived 66 kDa form of PCSK1. Subsequent processing of proSAAS may eliminate the inhibition. Slows down convertase-mediated processing of proopiomelanocortin and proenkephalin. May control the intracellular timing of PCSK1 rather than its total level of activity. Endogenous ligand for GPR171. Neuropeptide involved in the regulation of feeding. This is ProSAAS (PCSK1N) from Homo sapiens (Human).